Here is a 151-residue protein sequence, read N- to C-terminus: Small ribosomal subunit protein uS15 (151 aa).

The span at 1-11 (MPHRSRHKKGR) shows a compositional bias: basic residues. The interval 1-24 (MPHRSRHKKGRSSSVRPPHPTVPT) is disordered.

The protein belongs to the universal ribosomal protein uS15 family. As to quaternary structure, part of the 30S ribosomal subunit.

The sequence is that of Small ribosomal subunit protein uS15 from Pyrobaculum calidifontis (strain DSM 21063 / JCM 11548 / VA1).